Here is a 566-residue protein sequence, read N- to C-terminus: Putative lipase ATG15 (566 aa).

Topologically, residues 1 to 17 (MGSKHKKNASKSLRAFS) are cytoplasmic. The helical; Signal-anchor for type II membrane protein transmembrane segment at 18 to 38 (FIILSASIALVYIFNPVKLIF) threads the bilayer. Residues 39 to 566 (PSSIIRFHHG…CVEWGDEEDA (528 aa)) lie on the Lumenal side of the membrane. 2 N-linked (GlcNAc...) asparagine glycosylation sites follow: N264 and N348. S366 acts as the Charge relay system in catalysis. N-linked (GlcNAc...) asparagine glycosylation is present at N483. Residues 507 to 545 (DSLDDEPPLPNPLRPGKPSTTSSSQHHTSTTTTTETSRP) are disordered. Low complexity predominate over residues 522–543 (GKPSTTSSSQHHTSTTTTTETS).

It belongs to the AB hydrolase superfamily. Lipase family. In terms of assembly, binds to both phosphatidylinositol (PI) and phosphatidylinositol 3,5-bisphosphate (PIP2).

The protein resides in the endosome. The protein localises to the multivesicular body membrane. It is found in the prevacuolar compartment membrane. It carries out the reaction a triacylglycerol + H2O = a diacylglycerol + a fatty acid + H(+). In terms of biological role, lipase which is essential for lysis of subvacuolar cytoplasm to vacuole targeted bodies and intravacuolar autophagic bodies. Involved in the lysis of intravacuolar multivesicular body (MVB) vesicles. The intravacuolar membrane disintegration by ATG15 is critical to life span extension. In Meyerozyma guilliermondii (strain ATCC 6260 / CBS 566 / DSM 6381 / JCM 1539 / NBRC 10279 / NRRL Y-324) (Yeast), this protein is Putative lipase ATG15 (ATG15).